Reading from the N-terminus, the 529-residue chain is Peptide chain release factor 3 (529 aa).

The region spanning 7-275 (EQRRTFGIIS…AVVELAPSPR (269 aa)) is the tr-type G domain. Residues 16–23 (SHPDAGKT), 84–88 (DTPGH), and 138–141 (NKLD) each bind GTP.

It belongs to the TRAFAC class translation factor GTPase superfamily. Classic translation factor GTPase family. PrfC subfamily.

The protein localises to the cytoplasm. Functionally, increases the formation of ribosomal termination complexes and stimulates activities of RF-1 and RF-2. It binds guanine nucleotides and has strong preference for UGA stop codons. It may interact directly with the ribosome. The stimulation of RF-1 and RF-2 is significantly reduced by GTP and GDP, but not by GMP. In Syntrophus aciditrophicus (strain SB), this protein is Peptide chain release factor 3.